Here is a 108-residue protein sequence, read N- to C-terminus: MSFAGLNDADVAAALAACTAADSFNHKAFFAKVGLASKSSDDVKKAFYVIDQDKSGFIEEDELKLFLQNFSASARALTDAETKAFLADGDKDGDGMIGVDEFAAMIKG.

Position 2 is an N-acetylserine (Ser-2). EF-hand domains are found at residues 38-73 (KSSD…FSAS) and 77-108 (LTDA…MIKG). Ca(2+)-binding residues include Asp-51, Asp-53, Ser-55, Phe-57, Glu-59, Glu-62, Asp-90, Asp-92, Asp-94, Met-96, and Glu-101.

This sequence belongs to the parvalbumin family.

Functionally, in muscle, parvalbumin is thought to be involved in relaxation after contraction. It binds two calcium ions. The sequence is that of Parvalbumin beta 2 from Salmo salar (Atlantic salmon).